Here is a 144-residue protein sequence, read N- to C-terminus: Ferredoxin-thioredoxin reductase catalytic chain, chloroplastic (144 aa).

The N-terminal 31 residues, 1-31 (MTTQASTFAVAVPSVATPFRRHRNPFVVRAQ), are a transit peptide targeting the chloroplast. Cys-83 is a binding site for [4Fe-4S] cluster. Cys-85 acts as the Nucleophile in catalysis. Cysteines 85 and 115 form a disulfide. 3 residues coordinate [4Fe-4S] cluster: Cys-102, Cys-104, and Cys-113.

It belongs to the ferredoxin thioredoxin reductase beta subunit family. As to quaternary structure, heterodimer of subunit A (variable subunit) and subunit B (catalytic subunit). Heterodimeric FTR forms a complex with ferredoxin and thioredoxin. [4Fe-4S] cluster is required as a cofactor.

The protein resides in the plastid. It localises to the chloroplast. It carries out the reaction [thioredoxin]-disulfide + 2 reduced [2Fe-2S]-[ferredoxin] + 2 H(+) = [thioredoxin]-dithiol + 2 oxidized [2Fe-2S]-[ferredoxin]. In terms of biological role, catalytic subunit of the ferredoxin-thioredoxin reductase (FTR), which catalyzes the two-electron reduction of thioredoxins by the electrons provided by reduced ferredoxin. The protein is Ferredoxin-thioredoxin reductase catalytic chain, chloroplastic (FTRC) of Glycine max (Soybean).